The following is a 432-amino-acid chain: Metacaspase-1 (432 aa).

The segment covering 1–11 (MEVMDHHHHTS) has biased composition (basic residues). 2 disordered regions span residues 1-21 (MEVM…TTRR) and 41-87 (PQPG…PNAP). Residues 12–21 (STRPNPTTRR) are compositionally biased toward low complexity. The span at 46–74 (GAPPPQGGYGYPQPPPPQQPYGYSQPPPQ) shows a compositional bias: pro residues. Active-site residues include His223 and Cys279.

The protein belongs to the peptidase C14B family.

Involved in cell death (apoptosis). The polypeptide is Metacaspase-1 (casA) (Sclerotinia sclerotiorum (strain ATCC 18683 / 1980 / Ss-1) (White mold)).